Consider the following 396-residue polypeptide: Elongation factor Tu (396 aa).

Residues 10-206 (KPHVNVGTIG…ALDSYIPEPV (197 aa)) form the tr-type G domain. Positions 19–26 (GHIDHGKT) are G1. Position 19-26 (19-26 (GHIDHGKT)) interacts with GTP. Position 26 (threonine 26) interacts with Mg(2+). The G2 stretch occupies residues 60 to 64 (TKTVT). The tract at residues 83–86 (DCPG) is G3. Residues 83–87 (DCPGH) and 138–141 (NKCD) contribute to the GTP site. The G4 stretch occupies residues 138–141 (NKCD). Residues 176–178 (ASL) form a G5 region.

This sequence belongs to the TRAFAC class translation factor GTPase superfamily. Classic translation factor GTPase family. EF-Tu/EF-1A subfamily. As to quaternary structure, monomer.

It localises to the cytoplasm. It carries out the reaction GTP + H2O = GDP + phosphate + H(+). Functionally, GTP hydrolase that promotes the GTP-dependent binding of aminoacyl-tRNA to the A-site of ribosomes during protein biosynthesis. In Sorangium cellulosum (strain So ce56) (Polyangium cellulosum (strain So ce56)), this protein is Elongation factor Tu.